The primary structure comprises 1243 residues: Serine/threonine-protein kinase WNK4 (1243 aa).

Positions M1 to E17 are enriched in polar residues. The segment at M1 to V142 is disordered. The segment covering V65–A77 has biased composition (low complexity). The span at S78–K103 shows a compositional bias: pro residues. Residue S97 is modified to Phosphoserine. The span at A118–L127 shows a compositional bias: basic and acidic residues. Glycyl lysine isopeptide (Lys-Gly) (interchain with G-Cter in ubiquitin) cross-links involve residues K157 and K175. One can recognise a Protein kinase domain in the interval L174–F432. ATP is bound at residue S184. Glycyl lysine isopeptide (Lys-Gly) (interchain with G-Cter in ubiquitin) cross-links involve residues K186, K226, and K241. ATP-binding positions include T254–M257 and K304. Catalysis depends on D321, which acts as the Proton acceptor. K328 is covalently cross-linked (Glycyl lysine isopeptide (Lys-Gly) (interchain with G-Cter in ubiquitin)). Phosphoserine; by autocatalysis is present on residues S331 and S335. Glycyl lysine isopeptide (Lys-Gly) (interchain with G-Cter in ubiquitin) cross-links involve residues K387, K393, K450, and K454. The disordered stretch occupies residues K526 to D564. The segment covering P534–P556 has biased composition (pro residues). The segment at E557 to Q567 is interaction with KLHL3. At S575 the chain carries Phosphoserine. Positions S630–S641 are enriched in low complexity. Disordered regions lie at residues S630–D683, D751–E871, and S943–W1110. Basic residues predominate over residues P663 to L676. Pro residues predominate over residues E767 to D780. Residues W797–S812 show a composition bias toward low complexity. The segment covering P822–F843 has biased composition (pro residues). Low complexity-rich tracts occupy residues S844 to P854, P862 to E871, and S943 to S952. Residues P953–A970 show a composition bias toward pro residues. A Glycyl lysine isopeptide (Lys-Gly) (interchain with G-Cter in ubiquitin) cross-link involves residue K1010. The RFXV motif motif lies at R1016 to V1019. S1035 is subject to Phosphoserine. The span at E1065–A1077 shows a compositional bias: basic and acidic residues. Residues K1144, K1157, and K1158 each participate in a glycyl lysine isopeptide (Lys-Gly) (interchain with G-Cter in ubiquitin) cross-link. Residues R1166 to M1243 form a disordered region. 2 stretches are compositionally biased toward polar residues: residues S1193–R1204 and N1216–Q1228. Residue S1217 is modified to Phosphoserine.

Belongs to the protein kinase superfamily. Ser/Thr protein kinase family. WNK subfamily. Interacts with the C-terminal region of KCNJ1. Mg(2+) serves as cofactor. In terms of processing, autophosphorylated at Ser-331 and Ser-335, promoting its activation. Phosphorylated by WNK1 and WNK3. Phosphorylated at Ser-575 in a MAP3K15/ASK3-dependent process in response to osmotic stress or hypotonic low-chloride stimulation. Ubiquitinated by the BCR(KLHL3) complex, leading to its degradation. Also ubiquitinated by the BCR(KLHL2) complex. As to expression, expressed in kidney, colon and skin.

Its subcellular location is the cell junction. It is found in the tight junction. The catalysed reaction is L-seryl-[protein] + ATP = O-phospho-L-seryl-[protein] + ADP + H(+). It catalyses the reaction L-threonyl-[protein] + ATP = O-phospho-L-threonyl-[protein] + ADP + H(+). Its activity is regulated as follows. Activation requires autophosphorylation of Ser-331 and Ser-335. Autophosphorylation and subsequent activation is inhibited by increases in intracellular ionic strength: Cl(-) potently inhibits WNK4 kinase activity via direct binding. Also inhibited by K(+) ions. Serine/threonine-protein kinase component of the WNK4-SPAK/OSR1 kinase cascade, which acts as a key regulator of ion transport in the distal nephron and blood pressure. The WNK4-SPAK/OSR1 kinase cascade is composed of WNK4, which mediates phosphorylation and activation of downstream kinases OXSR1/OSR1 and STK39/SPAK. Following activation, OXSR1/OSR1 and STK39/SPAK catalyze phosphorylation of ion cotransporters, such as SLC12A1/NKCC2, SLC12A2/NKCC1, SLC12A3/NCC, SLC12A5/KCC2 or SLC12A6/KCC3, regulating their activity. Acts as a molecular switch that regulates the balance between renal salt reabsorption and K(+) secretion by modulating the activities of renal transporters and channels, including the Na-Cl cotransporter SLC12A3/NCC and the K(+) channel, KCNJ1/ROMK. Regulates NaCl reabsorption in the distal nephron by activating the thiazide-sensitive Na-Cl cotransporter SLC12A3/NCC in distal convoluted tubule cells of kidney: activates SLC12A3/NCC in a OXSR1/OSR1- and STK39/SPAK-dependent process. Also acts as a scaffold protein independently of its protein kinase activity: negatively regulates cell membrane localization of various transporters and channels (CFTR, KCNJ1/ROMK, SLC4A4, SLC26A9 and TRPV4) by clathrin-dependent endocytosis. Also inhibits the activity of the epithelial Na(+) channel (ENaC) SCNN1A, SCNN1B, SCNN1D in a inase-independent mechanism. May also phosphorylate NEDD4L. The protein is Serine/threonine-protein kinase WNK4 of Homo sapiens (Human).